Consider the following 464-residue polypeptide: Cysteine--tRNA ligase (464 aa).

Zn(2+) is bound at residue cysteine 28. The 'HIGH' region signature appears at 30–40 (PTVYDTAHIGN). 3 residues coordinate Zn(2+): cysteine 212, histidine 237, and glutamate 241. Residues 270 to 274 (KMSKS) carry the 'KMSKS' region motif. Residue lysine 273 coordinates ATP.

This sequence belongs to the class-I aminoacyl-tRNA synthetase family. As to quaternary structure, monomer. The cofactor is Zn(2+).

The protein localises to the cytoplasm. The enzyme catalyses tRNA(Cys) + L-cysteine + ATP = L-cysteinyl-tRNA(Cys) + AMP + diphosphate. This chain is Cysteine--tRNA ligase, found in Wolbachia pipientis subsp. Culex pipiens (strain wPip).